We begin with the raw amino-acid sequence, 743 residues long: Homeobox-leucine zipper protein PROTODERMAL FACTOR 2 (743 aa).

The disordered stretch occupies residues 1 to 72 (MYHPNMFESH…KKRYHRHTQR (72 aa)). Basic and acidic residues predominate over residues 30-39 (SREDDFETKS). Positions 60–71 (PNKKKRYHRHTQ) are enriched in basic residues. The homeobox DNA-binding region spans 62–121 (KKKRYHRHTQRQIQELESFFKECPHPDDKQRKELSRDLNLEPLQVKFWFQNKRTQMKAQS). A coiled-coil region spans residues 110-192 (FQNKRTQMKA…DRISAIAAKY (83 aa)). An START domain is found at 244 to 476 (SETDKPIIVE…LERQCERLAS (233 aa)).

It belongs to the HD-ZIP homeobox family. Class IV subfamily. Interacts with GAI/RGA2, RGA/RGA1/GRS, RGL2/SCL19 and ATML1. Binds to AIL7/PLT7, ANT, BBM and AIL1. Specifically expressed in the layer 1 (L1) of shoot meristems.

It localises to the nucleus. Functionally, probable transcription factor that binds to the L1 box DNA sequence 5'-TAAATG[CT]A-3'. Plays a role in maintaining the identity of L1 cells, possibly by interacting with their L1 box or other target-gene promoters; binds to the LIP1 gene promoter and stimulates its expression upon imbibition. Acts as a positive regulator of gibberellins (GAs)-regulated epidermal gene expression (e.g. LIP1, LIP2, LTP1, FDH and PDF1). Functionally redundant to ATML1. Involved, together with HDG proteins (e.g. HDG1, HDG2, HDG5 and HDG12), in the regulation of flower organs development by promoting the expression of APETALA 3 (AP3) in the epidermis and internal cell layers of developing flowers. Seems to promote cell differentiation. This chain is Homeobox-leucine zipper protein PROTODERMAL FACTOR 2, found in Arabidopsis thaliana (Mouse-ear cress).